The following is an 88-amino-acid chain: Small ribosomal subunit protein bS16 (88 aa).

It belongs to the bacterial ribosomal protein bS16 family.

In Anaeromyxobacter dehalogenans (strain 2CP-1 / ATCC BAA-258), this protein is Small ribosomal subunit protein bS16.